The primary structure comprises 109 residues: Sperm-specific class P protein 9/11 (109 aa).

Residues 2 to 109 (SLTADPPACT…TVTIPMSATA (108 aa)) enclose the MSP domain.

Expressed at higher level in testis.

This is Sperm-specific class P protein 9/11 (ssp-9) from Caenorhabditis elegans.